A 736-amino-acid polypeptide reads, in one-letter code: Phosphoribosylformylglycinamidine synthase subunit PurL (736 aa).

Residue H48 is part of the active site. ATP is bound by residues Y51 and K90. E92 is a Mg(2+) binding site. Substrate-binding positions include 93-96 (SHNH) and R115. Catalysis depends on H94, which acts as the Proton acceptor. D116 is a Mg(2+) binding site. A substrate-binding site is contributed by Q239. D267 is a binding site for Mg(2+). 311–313 (ESQ) serves as a coordination point for substrate. Residues D492 and G529 each coordinate ATP. N530 provides a ligand contact to Mg(2+). S532 contributes to the substrate binding site.

The protein belongs to the FGAMS family. In terms of assembly, monomer. Part of the FGAM synthase complex composed of 1 PurL, 1 PurQ and 2 PurS subunits.

It localises to the cytoplasm. The enzyme catalyses N(2)-formyl-N(1)-(5-phospho-beta-D-ribosyl)glycinamide + L-glutamine + ATP + H2O = 2-formamido-N(1)-(5-O-phospho-beta-D-ribosyl)acetamidine + L-glutamate + ADP + phosphate + H(+). It functions in the pathway purine metabolism; IMP biosynthesis via de novo pathway; 5-amino-1-(5-phospho-D-ribosyl)imidazole from N(2)-formyl-N(1)-(5-phospho-D-ribosyl)glycinamide: step 1/2. Its function is as follows. Part of the phosphoribosylformylglycinamidine synthase complex involved in the purines biosynthetic pathway. Catalyzes the ATP-dependent conversion of formylglycinamide ribonucleotide (FGAR) and glutamine to yield formylglycinamidine ribonucleotide (FGAM) and glutamate. The FGAM synthase complex is composed of three subunits. PurQ produces an ammonia molecule by converting glutamine to glutamate. PurL transfers the ammonia molecule to FGAR to form FGAM in an ATP-dependent manner. PurS interacts with PurQ and PurL and is thought to assist in the transfer of the ammonia molecule from PurQ to PurL. This chain is Phosphoribosylformylglycinamidine synthase subunit PurL, found in Beijerinckia indica subsp. indica (strain ATCC 9039 / DSM 1715 / NCIMB 8712).